A 209-amino-acid polypeptide reads, in one-letter code: ATP-dependent dethiobiotin synthetase BioD (209 aa).

Asp13–Val18 contacts ATP. Thr17 contacts Mg(2+). Lys33 is a catalytic residue. Residue Glu100 participates in Mg(2+) binding. ATP contacts are provided by residues Glu100 to Gly103 and Pro184 to Leu186.

The protein belongs to the dethiobiotin synthetase family. In terms of assembly, homodimer. It depends on Mg(2+) as a cofactor.

It localises to the cytoplasm. It catalyses the reaction (7R,8S)-7,8-diammoniononanoate + CO2 + ATP = (4R,5S)-dethiobiotin + ADP + phosphate + 3 H(+). It functions in the pathway cofactor biosynthesis; biotin biosynthesis; biotin from 7,8-diaminononanoate: step 1/2. In terms of biological role, catalyzes a mechanistically unusual reaction, the ATP-dependent insertion of CO2 between the N7 and N8 nitrogen atoms of 7,8-diaminopelargonic acid (DAPA, also called 7,8-diammoniononanoate) to form a ureido ring. The chain is ATP-dependent dethiobiotin synthetase BioD from Rhizorhabdus wittichii (strain DSM 6014 / CCUG 31198 / JCM 15750 / NBRC 105917 / EY 4224 / RW1) (Sphingomonas wittichii).